The primary structure comprises 129 residues: UPF0344 protein USA300HOU_0928 (129 aa).

The next 4 helical transmembrane spans lie at 1–21, 36–56, 67–87, and 99–119; these read MLHL…ATYL, LHMI…WILI, MLLT…EVSI, and MFWI…ILPL.

This sequence belongs to the UPF0344 family.

The protein resides in the cell membrane. In Staphylococcus aureus (strain USA300 / TCH1516), this protein is UPF0344 protein USA300HOU_0928.